A 381-amino-acid polypeptide reads, in one-letter code: uncharacterized protein (381 aa).

A compositionally biased stretch (polar residues) spans 331 to 340; that stretch reads MQNGYANNGR. Residues 331–381 form a disordered region; sequence MQNGYANNGRNHQRERFERPEKNSKKNKFLPFNGSNKEKKRDKLKKNCVIM. The segment covering 342–354 has biased composition (basic and acidic residues); it reads HQRERFERPEKNS. Residues 372–381 are compositionally biased toward basic residues; sequence DKLKKNCVIM.

It is found in the cytoplasm. The protein localises to the nucleus. This is an uncharacterized protein from Saccharomyces cerevisiae (strain ATCC 204508 / S288c) (Baker's yeast).